The chain runs to 438 residues: Fibrinogen gamma chain (438 aa).

The first 25 residues, 1-25 (MTRLPKQGLLLLQSLALLSSAFGNI), serve as a signal peptide directing secretion. Residue N76 is glycosylated (N-linked (GlcNAc...) asparagine). One can recognise a Fibrinogen C-terminal domain in the interval 167-414 (QIQEFTGKDC…SVTMKIMPLN (248 aa)). C176 and C205 are joined by a disulfide. Ca(2+) contacts are provided by D341, D343, and G347. Residues C349 and C362 are joined by a disulfide bond.

As to quaternary structure, heterohexamer; disulfide linked. Contains 2 sets of 3 non-identical chains (alpha, beta and gamma). The 2 heterotrimers are in head to head conformation with the N-termini in a small central domain. Post-translationally, conversion of fibrinogen to fibrin is triggered by thrombin, which cleaves fibrinopeptides A and B from alpha and beta chains, and thus exposes the N-terminal polymerization sites responsible for the formation of the soft clot. The soft clot is converted into the hard clot by factor XIIIA which catalyzes the epsilon-(gamma-glutamyl)lysine cross-linking between gamma chains (stronger) and between alpha chains (weaker) of different monomers.

It localises to the secreted. In terms of biological role, together with fibrinogen alpha (FGA) and fibrinogen beta (FGB), polymerizes to form an insoluble fibrin matrix. Has a major function in hemostasis as one of the primary components of blood clots. The polypeptide is Fibrinogen gamma chain (fgg) (Xenopus laevis (African clawed frog)).